An 88-amino-acid chain; its full sequence is Small ribosomal subunit protein uS15c (88 aa).

Belongs to the universal ribosomal protein uS15 family. Part of the 30S ribosomal subunit.

It is found in the plastid. It localises to the chloroplast. This is Small ribosomal subunit protein uS15c (rps15) from Pinus thunbergii (Japanese black pine).